Reading from the N-terminus, the 78-residue chain is Ferredoxin 7Fe (78 aa).

4Fe-4S ferredoxin-type domains lie at 2–29 (AYVI…IHEG) and 31–60 (DQYY…HEDF). Residues cysteine 9 and cysteine 17 each coordinate [3Fe-4S] cluster. Positions 21, 40, 43, and 46 each coordinate [4Fe-4S] cluster. Cysteine 50 contacts [3Fe-4S] cluster.

In terms of assembly, monomer. It depends on [4Fe-4S] cluster as a cofactor. Requires [3Fe-4S] cluster as cofactor.

This is Ferredoxin 7Fe (fdxA) from Hydrogenibacillus schlegelii (Bacillus schlegelii).